A 72-amino-acid polypeptide reads, in one-letter code: Translation initiation factor IF-1 (72 aa).

The region spanning 1–72 (MAKEEAIEIE…TKGRITYRYK (72 aa)) is the S1-like domain.

It belongs to the IF-1 family. Component of the 30S ribosomal translation pre-initiation complex which assembles on the 30S ribosome in the order IF-2 and IF-3, IF-1 and N-formylmethionyl-tRNA(fMet); mRNA recruitment can occur at any time during PIC assembly.

It localises to the cytoplasm. Functionally, one of the essential components for the initiation of protein synthesis. Stabilizes the binding of IF-2 and IF-3 on the 30S subunit to which N-formylmethionyl-tRNA(fMet) subsequently binds. Helps modulate mRNA selection, yielding the 30S pre-initiation complex (PIC). Upon addition of the 50S ribosomal subunit IF-1, IF-2 and IF-3 are released leaving the mature 70S translation initiation complex. The polypeptide is Translation initiation factor IF-1 (Chlorobium phaeobacteroides (strain DSM 266 / SMG 266 / 2430)).